The sequence spans 117 residues: Large ribosomal subunit protein eL22 (117 aa).

Residues S49 and S50 each carry the phosphoserine modification.

The protein belongs to the eukaryotic ribosomal protein eL22 family. As to quaternary structure, component of the large ribosomal subunit (LSU). Mature yeast ribosomes consist of a small (40S) and a large (60S) subunit. The 40S small subunit contains 1 molecule of ribosomal RNA (18S rRNA) and at least 33 different proteins. The large 60S subunit contains 3 rRNA molecules (25S, 5.8S and 5S rRNA) and at least 46 different proteins.

The protein localises to the cytoplasm. It localises to the nucleus. It is found in the nucleolus. In terms of biological role, component of the ribosome, a large ribonucleoprotein complex responsible for the synthesis of proteins in the cell. The small ribosomal subunit (SSU) binds messenger RNAs (mRNAs) and translates the encoded message by selecting cognate aminoacyl-transfer RNA (tRNA) molecules. The large subunit (LSU) contains the ribosomal catalytic site termed the peptidyl transferase center (PTC), which catalyzes the formation of peptide bonds, thereby polymerizing the amino acids delivered by tRNAs into a polypeptide chain. The nascent polypeptides leave the ribosome through a tunnel in the LSU and interact with protein factors that function in enzymatic processing, targeting, and the membrane insertion of nascent chains at the exit of the ribosomal tunnel. This is Large ribosomal subunit protein eL22 (rpl22) from Schizosaccharomyces pombe (strain 972 / ATCC 24843) (Fission yeast).